We begin with the raw amino-acid sequence, 376 residues long: Carbamoyl phosphate synthase small chain (376 aa).

Residues 1–187 (MKALLALEDG…KEDGSFLWKQ (187 aa)) are CPSase. The L-glutamine site is built by Ser45, Gly239, and Gly241. A Glutamine amidotransferase type-1 domain is found at 189–376 (KIPLIVYDYG…KEVVLLKLGC (188 aa)). Cys266 functions as the Nucleophile in the catalytic mechanism. 5 residues coordinate L-glutamine: Leu267, Gln270, Asn308, Gly310, and Phe311. Catalysis depends on residues His349 and Glu351.

The protein belongs to the CarA family. In terms of assembly, composed of two chains; the small (or glutamine) chain promotes the hydrolysis of glutamine to ammonia, which is used by the large (or ammonia) chain to synthesize carbamoyl phosphate. Tetramer of heterodimers (alpha,beta)4.

It carries out the reaction hydrogencarbonate + L-glutamine + 2 ATP + H2O = carbamoyl phosphate + L-glutamate + 2 ADP + phosphate + 2 H(+). The enzyme catalyses L-glutamine + H2O = L-glutamate + NH4(+). Its pathway is amino-acid biosynthesis; L-arginine biosynthesis; carbamoyl phosphate from bicarbonate: step 1/1. It participates in pyrimidine metabolism; UMP biosynthesis via de novo pathway; (S)-dihydroorotate from bicarbonate: step 1/3. Small subunit of the glutamine-dependent carbamoyl phosphate synthetase (CPSase). CPSase catalyzes the formation of carbamoyl phosphate from the ammonia moiety of glutamine, carbonate, and phosphate donated by ATP, constituting the first step of 2 biosynthetic pathways, one leading to arginine and/or urea and the other to pyrimidine nucleotides. The small subunit (glutamine amidotransferase) binds and cleaves glutamine to supply the large subunit with the substrate ammonia. The protein is Carbamoyl phosphate synthase small chain of Lawsonia intracellularis (strain PHE/MN1-00).